Here is a 1324-residue protein sequence, read N- to C-terminus: Probable phosphoribosylformylglycinamidine synthase (1324 aa).

ATP-binding positions include 314–325 (GATTGTGGRIRD), 394–396 (SGF), and Ala681. Positions 682, 721, 725, and 894 each coordinate Mg(2+). Position 896 (Ser896) interacts with ATP. Positions 1053–1295 (RVAIIREEGS…LTWQWAESSE (243 aa)) constitute a Glutamine amidotransferase type-1 domain. The active-site Nucleophile is Cys1146. Residues His1280 and Asp1282 contribute to the active site.

It in the N-terminal section; belongs to the FGAMS family.

Its subcellular location is the cytoplasm. It catalyses the reaction N(2)-formyl-N(1)-(5-phospho-beta-D-ribosyl)glycinamide + L-glutamine + ATP + H2O = 2-formamido-N(1)-(5-O-phospho-beta-D-ribosyl)acetamidine + L-glutamate + ADP + phosphate + H(+). The protein operates within purine metabolism; IMP biosynthesis via de novo pathway; 5-amino-1-(5-phospho-D-ribosyl)imidazole from N(2)-formyl-N(1)-(5-phospho-D-ribosyl)glycinamide: step 1/2. In terms of biological role, phosphoribosylformylglycinamidine synthase involved in the purines biosynthetic pathway. Catalyzes the ATP-dependent conversion of formylglycinamide ribonucleotide (FGAR) and glutamine to yield formylglycinamidine ribonucleotide (FGAM) and glutamate. In Caenorhabditis elegans, this protein is Probable phosphoribosylformylglycinamidine synthase.